The chain runs to 470 residues: Poly(A) polymerase catalytic subunit (470 aa).

Catalysis depends on residues Asp192 and Asp194.

It belongs to the poxviridae poly(A) polymerase catalytic subunit family. As to quaternary structure, heterodimer of a large (catalytic) subunit and a small (regulatory) subunit.

The enzyme catalyses RNA(n) + ATP = RNA(n)-3'-adenine ribonucleotide + diphosphate. Its function is as follows. Polymerase that creates the 3'-poly(A) tail of mRNA's. The chain is Poly(A) polymerase catalytic subunit (PAPL) from Myxoma virus (strain Lausanne) (MYXV).